The following is a 210-amino-acid chain: uncharacterized protein (210 aa).

Positions 1 to 21 (MLKMNVKKALVILVALALVAA) are cleaved as a signal peptide.

This is an uncharacterized protein from Archaeoglobus fulgidus (strain ATCC 49558 / DSM 4304 / JCM 9628 / NBRC 100126 / VC-16).